The chain runs to 1391 residues: DNA-directed RNA polymerase subunit beta' (1391 aa).

Residues Cys72, Cys74, Cys87, and Cys90 each contribute to the Zn(2+) site. Residues Asp462, Asp464, and Asp466 each contribute to the Mg(2+) site. Zn(2+) contacts are provided by Cys816, Cys890, Cys897, and Cys900.

Belongs to the RNA polymerase beta' chain family. As to quaternary structure, the RNAP catalytic core consists of 2 alpha, 1 beta, 1 beta' and 1 omega subunit. When a sigma factor is associated with the core the holoenzyme is formed, which can initiate transcription. Mg(2+) serves as cofactor. Zn(2+) is required as a cofactor.

The enzyme catalyses RNA(n) + a ribonucleoside 5'-triphosphate = RNA(n+1) + diphosphate. Its function is as follows. DNA-dependent RNA polymerase catalyzes the transcription of DNA into RNA using the four ribonucleoside triphosphates as substrates. This chain is DNA-directed RNA polymerase subunit beta', found in Neisseria meningitidis serogroup A / serotype 4A (strain DSM 15465 / Z2491).